Here is a 143-residue protein sequence, read N- to C-terminus: ATP synthase subunit b' (143 aa).

A helical transmembrane segment spans residues 6–26; it reads ATLPLMALQFVLLAIILNAIF.

This sequence belongs to the ATPase B chain family. F-type ATPases have 2 components, F(1) - the catalytic core - and F(0) - the membrane proton channel. F(1) has five subunits: alpha(3), beta(3), gamma(1), delta(1), epsilon(1). F(0) has four main subunits: a(1), b(1), b'(1) and c(10-14). The alpha and beta chains form an alternating ring which encloses part of the gamma chain. F(1) is attached to F(0) by a central stalk formed by the gamma and epsilon chains, while a peripheral stalk is formed by the delta, b and b' chains.

The protein localises to the cellular thylakoid membrane. F(1)F(0) ATP synthase produces ATP from ADP in the presence of a proton or sodium gradient. F-type ATPases consist of two structural domains, F(1) containing the extramembraneous catalytic core and F(0) containing the membrane proton channel, linked together by a central stalk and a peripheral stalk. During catalysis, ATP synthesis in the catalytic domain of F(1) is coupled via a rotary mechanism of the central stalk subunits to proton translocation. Functionally, component of the F(0) channel, it forms part of the peripheral stalk, linking F(1) to F(0). The b'-subunit is a diverged and duplicated form of b found in plants and photosynthetic bacteria. The polypeptide is ATP synthase subunit b' (Crocosphaera subtropica (strain ATCC 51142 / BH68) (Cyanothece sp. (strain ATCC 51142))).